Consider the following 798-residue polypeptide: Protocadherin beta-13 (798 aa).

Positions 1 to 28 (MEASGKLICRQRQVLFSFLLLGLSLAGA) are cleaved as a signal peptide. Topologically, residues 29-690 (AEPRSYSVVE…AQADSLTVYL (662 aa)) are extracellular. 5 consecutive Cadherin domains span residues 36-134 (VVEE…SPVF), 139-243 (MLVK…APEF), 248-348 (YRVQ…APEV), 353-451 (FTSP…APAF), and 456-561 (YTLF…SPFV). N-linked (GlcNAc...) asparagine glycosylation is found at N418 and N436. N567 is a glycosylation site (N-linked (GlcNAc...) asparagine). A Cadherin 6 domain is found at 568 to 671 (GSAPCTELVP…LVDGFSQPYL (104 aa)). Residues 691 to 711 (VVALASVSSLFLFSVLLFVAV) traverse the membrane as a helical segment. Residues 712–798 (RLCRRSRAAS…FPNNFGFNIQ (87 aa)) lie on the Cytoplasmic side of the membrane.

The protein localises to the cell membrane. Its function is as follows. Potential calcium-dependent cell-adhesion protein. May be involved in the establishment and maintenance of specific neuronal connections in the brain. The chain is Protocadherin beta-13 (PCDHB13) from Pan troglodytes (Chimpanzee).